Here is a 1072-residue protein sequence, read N- to C-terminus: Isoleucine--tRNA ligase, cytoplasmic (1072 aa).

Positions Pro47–His57 match the 'HIGH' region motif. A Glycyl lysine isopeptide (Lys-Gly) (interchain with G-Cter in ubiquitin) cross-link involves residue Lys486. The short motif at Lys602–Ser606 is the 'KMSKS' region element. Lys605 serves as a coordination point for ATP. Residues Ser829 and Ser1059 each carry the phosphoserine modification.

This sequence belongs to the class-I aminoacyl-tRNA synthetase family.

The protein resides in the cytoplasm. It catalyses the reaction tRNA(Ile) + L-isoleucine + ATP = L-isoleucyl-tRNA(Ile) + AMP + diphosphate. This is Isoleucine--tRNA ligase, cytoplasmic (ILS1) from Saccharomyces cerevisiae (strain ATCC 204508 / S288c) (Baker's yeast).